The primary structure comprises 269 residues: MNFIVYPALDIRNGAVVRLQQGDYARQTRYDDQVLPRAQAFADSGATWMHLVDLDAAKAGGYTLAPLLRQITRATGLQVQTGGGVRSRDDVVRILDAGAARVVIGSLAVRQMACVIEWLQAFGPERITVALDTRQDAGGVWRLPVHGWTEVAEATLDVLAQQYAAAGLRHLLCTDIARDGMLSGPNMDVYTYLRALVPAVQLQVSGGARDVADVVAAKMAGCAGIVLGKALLEGRLALKEAVQHGSVADPGDPLPCGELTEPVCRYRSV.

Catalysis depends on Asp10, which acts as the Proton acceptor. Asp132 serves as the catalytic Proton donor.

It belongs to the HisA/HisF family.

It is found in the cytoplasm. It carries out the reaction 1-(5-phospho-beta-D-ribosyl)-5-[(5-phospho-beta-D-ribosylamino)methylideneamino]imidazole-4-carboxamide = 5-[(5-phospho-1-deoxy-D-ribulos-1-ylimino)methylamino]-1-(5-phospho-beta-D-ribosyl)imidazole-4-carboxamide. Its pathway is amino-acid biosynthesis; L-histidine biosynthesis; L-histidine from 5-phospho-alpha-D-ribose 1-diphosphate: step 4/9. The sequence is that of 1-(5-phosphoribosyl)-5-[(5-phosphoribosylamino)methylideneamino] imidazole-4-carboxamide isomerase from Xylella fastidiosa (strain M12).